The sequence spans 313 residues: tRNA dimethylallyltransferase (313 aa).

Residue 17 to 24 (GPTASGKT) participates in ATP binding. 19 to 24 (TASGKT) contributes to the substrate binding site. 3 interaction with substrate tRNA regions span residues 42–45 (DSAL), 166–170 (QRLSR), and 247–252 (RCVGYR).

This sequence belongs to the IPP transferase family. As to quaternary structure, monomer. Mg(2+) serves as cofactor.

It catalyses the reaction adenosine(37) in tRNA + dimethylallyl diphosphate = N(6)-dimethylallyladenosine(37) in tRNA + diphosphate. In terms of biological role, catalyzes the transfer of a dimethylallyl group onto the adenine at position 37 in tRNAs that read codons beginning with uridine, leading to the formation of N6-(dimethylallyl)adenosine (i(6)A). The protein is tRNA dimethylallyltransferase of Serratia proteamaculans (strain 568).